The primary structure comprises 186 residues: Potassium-transporting ATPase KdpC subunit (186 aa).

The chain crosses the membrane as a helical span at residues 10-30 (LTIITMVLCGFLFPLAITLIG).

The protein belongs to the KdpC family. In terms of assembly, the system is composed of three essential subunits: KdpA, KdpB and KdpC.

It is found in the cell membrane. Functionally, part of the high-affinity ATP-driven potassium transport (or Kdp) system, which catalyzes the hydrolysis of ATP coupled with the electrogenic transport of potassium into the cytoplasm. This subunit acts as a catalytic chaperone that increases the ATP-binding affinity of the ATP-hydrolyzing subunit KdpB by the formation of a transient KdpB/KdpC/ATP ternary complex. This is Potassium-transporting ATPase KdpC subunit from Staphylococcus aureus (strain MRSA252).